The chain runs to 870 residues: Leucine--tRNA ligase (870 aa).

Positions 42–52 (PYPSGKLHMGH) match the 'HIGH' region motif. The 'KMSKS' region signature appears at 629–633 (KMSKS). Position 632 (Lys-632) interacts with ATP.

It belongs to the class-I aminoacyl-tRNA synthetase family.

It is found in the cytoplasm. The catalysed reaction is tRNA(Leu) + L-leucine + ATP = L-leucyl-tRNA(Leu) + AMP + diphosphate. The sequence is that of Leucine--tRNA ligase from Azotobacter vinelandii (strain DJ / ATCC BAA-1303).